Here is a 350-residue protein sequence, read N- to C-terminus: MSRVQTVLGSITPNLLGRTLTHEHVALDFEHFYKPPPADFENELRQKIKMSTLGYVRLYPYSSRENLRFNDEEALEAVRQDVLLYKKHGGGAIVENSTYGLKPNLEFIVDLAKTTGVHFIAGTGHYIHATQDATHRNLTVEQMTDMYSKDILTGIDVNGRIVKCGFIGEVASVYPVQEFERHALLAAGEIQEVLGCGVSLHPHRVSKAPFEIMRLYLEAGGRANKCVMSHLDRTIFDMDELLEFAKLGCYLQYDLFGTESSYYQLNATVDMISDGQRIENIMKLINEGLVDRLLMSHDIHTKHRLTSYGGHGYHHIHMNILPRMFQRGVTLEQVEQMTVTNPANWLSFNA.

H22, H24, E169, H201, H230, and D298 together coordinate a divalent metal cation.

It belongs to the metallo-dependent hydrolases superfamily. Phosphotriesterase family. Requires a divalent metal cation as cofactor.

This chain is Phosphotriesterase-related protein, found in Drosophila mojavensis (Fruit fly).